Consider the following 1032-residue polypeptide: MGDIMRPIPFEELLTRIFDEYQQQRSIFGIPEQQFYSPVKGKTVSVFGETCATPVGPAAGPHTQLAQNIVTSWLTGGRFIELKTVQILDRLELEKPCIDAEDECFNTEWSTEFTLLKAWDEYLKAWFALHLLEAMFQPSDSGKSFIFNMSVGYNLEGIKQPPMQQFIDNMMDASDHPKFAQYRDTLNKLLQDDAFLARHGLQEKRESLQALPARIPTSMVHGVTLSTMHGCPPHEIEAICRYMLEEKGLNTFVKLNPTLLGYARVREILDVCGFGYIGLKEESFDHDLKLTQALEMLERLMALAKEKSLGFGVKLTNTLGTINNKGALPGEEMYMSGRALFPLSINVAAVLSRAFDGKLPISYSGGASQLTIRDIFDTGIRPITMATDLLKPGGYLRLSACMRELEGSDAWGLDHVDVERLNRLAADALTMEYTQKHWKPEERIEVAEDLPLTDCYVAPCVTACAIKQDIPEYIRLLGEHRYADALELIYQRNALPAITGHICDHQCQYNCTRLDYDSALNIRELKKVALEKGWDEYKQRWHKPAGSGSRHPVAVIGAGPAGLAAGYFLARAGHPVTLFEREANAGGVVKNIIPQFRIPAELIQHDIDFVAAHGVKFEYGCSPDLTIEQLKNQGFHYVLIATGTDKNSGVKLAGDNQNVWKSLPFLREYNKGTALKLGKHVVVVGAGNTAMDCARAALRVPGVEKATIVYRRSLQEMPAWREEYEEALHDGVEFRFLNNPERFDADGTLTLRVMSLGEPDEKGRRRPVETNETVTLLVDSLITAIGEQQDTEALNAMGVPLDKNGWPDVDHNGETRLTDVFMIGDVQRGPSSIVAAVGTARRATDAILSRENIRSHQNDKYWNNVNPAEIYQRKGDISITLVNSDDRDAFVAQEAARCLECNYVCSKCVDVCPNRANVSIAVPGFQNRFQTLHLDAYCNECGNCAQFCPWNGKPYKDKITVFSLAQDFDNSSNPGFLVEDCRVRVRLNNQSWVLNIDSKGQFNNVPPELNDMCRIISHVHQHHHYLLGRVEV.

In terms of domain architecture, 4Fe-4S ferredoxin-type spans 928–958; it reads RFQTLHLDAYCNECGNCAQFCPWNGKPYKDK. [4Fe-4S] cluster-binding residues include C938, C941, C944, and C948.

Requires [4Fe-4S] cluster as cofactor.

Its function is as follows. Could be an iron-sulfur flavoprotein with NADPH:O(2) oxidoreductase activity. The sequence is that of Putative oxidoreductase YgfK (ygfK) from Escherichia coli (strain K12).